A 377-amino-acid polypeptide reads, in one-letter code: Presenilin-associated rhomboid-like protein, mitochondrial (377 aa).

A mitochondrion-targeting transit peptide spans Met1 to Gly52. At Phe53–Pro99 the chain is on the mitochondrial matrix side. Phosphoserine is present on residues Ser65 and Ser68. A helical membrane pass occupies residues Leu100–Tyr119. Over Glu120 to Arg165 the chain is Mitochondrial intermembrane. Residues Thr166 to Ser185 form a helical membrane-spanning segment. Residues Leu186–Ser205 lie on the Mitochondrial matrix side of the membrane. A helical membrane pass occupies residues Pro206 to Trp228. The Mitochondrial intermembrane segment spans residues Ser229–Gln242. A helical transmembrane segment spans residues Phe243–Val260. At Cys261–Pro270 the chain is on the mitochondrial matrix side. The chain crosses the membrane as a helical span at residues Ser271–Thr287. The active-site Nucleophile is the Ser275. Residues Lys288–Arg293 lie on the Mitochondrial intermembrane side of the membrane. The chain crosses the membrane as a helical span at residues Leu294 to Met316. Topologically, residues Asp317–His330 are mitochondrial matrix. The chain crosses the membrane as a helical span at residues Ala331–Trp352. His333 is a catalytic residue. Residues Lys353 to Lys377 lie on the Mitochondrial intermembrane side of the membrane.

Belongs to the peptidase S54 family. As to quaternary structure, interacts with PSEN1 and PSEN2. Binds OPA1. Post-translationally, P-beta is proteolytically processed (beta-cleavage) in a PARL-dependent manner.

The protein localises to the mitochondrion inner membrane. It localises to the nucleus. The catalysed reaction is Cleaves type-1 transmembrane domains using a catalytic dyad composed of serine and histidine that are contributed by different transmembrane domains.. Functionally, required for the control of apoptosis during postnatal growth. Essential for proteolytic processing of an antiapoptotic form of OPA1 which prevents the release of mitochondrial cytochrome c in response to intrinsic apoptotic signals. Required for the maturation of PINK1 into its 52kDa mature form after its cleavage by mitochondrial-processing peptidase (MPP). Promotes cleavage of serine/threonine-protein phosphatase PGAM5 in damaged mitochondria in response to loss of mitochondrial membrane potential. Mediates differential cleavage of PINK1 and PGAM5 depending on the health status of mitochondria, disassociating from PINK1 and associating with PGAM5 in response to mitochondrial membrane potential loss. Required for processing of CLPB into a form with higher protein disaggregase activity by removing an autoinhibitory N-terminal peptide. Promotes processing of DIABLO/SMAC in the mitochondrion which is required for DIABLO apoptotic activity. Also required for cleavage of STARD7 and TTC19. Promotes changes in mitochondria morphology regulated by phosphorylation of P-beta domain. The sequence is that of Presenilin-associated rhomboid-like protein, mitochondrial (PARL) from Bos taurus (Bovine).